The following is an 81-amino-acid chain: Trefoil factor 3 (81 aa).

Residues 1–22 (METRALWLMLLVVLVAGSSGIA) form the signal peptide. Residues 31–74 (SQCMVPANVRVDCGYPSVTSEQCNNRGCCFDSSIPNVPWCFKPL) form the P-type domain. 3 disulfides stabilise this stretch: Cys33-Cys59, Cys43-Cys58, and Cys53-Cys70.

Monomer. Homodimer; disulfide-linked. As to expression, expressed in goblet cells of the intestines and colon (at protein level). Expressed abundantly in goblet cells of intestine and colon, and at low levels in stomach. No expression in brain, lung, spleen, kidney, uterus, pancreas, liver, heart or thymus.

It is found in the secreted. The protein localises to the extracellular space. The protein resides in the extracellular matrix. Its subcellular location is the cytoplasm. In terms of biological role, involved in the maintenance and repair of the intestinal mucosa. Promotes the mobility of epithelial cells in healing processes (motogen). The protein is Trefoil factor 3 (Tff3) of Mus musculus (Mouse).